The sequence spans 296 residues: Nucleotide-binding protein ABC3036 (296 aa).

13–20 (GMSGAGKS) lines the ATP pocket. Position 64 to 67 (64 to 67 (DLRG)) interacts with GTP.

Belongs to the RapZ-like family.

Displays ATPase and GTPase activities. The chain is Nucleotide-binding protein ABC3036 from Shouchella clausii (strain KSM-K16) (Alkalihalobacillus clausii).